Reading from the N-terminus, the 236-residue chain is Uridylate kinase (236 aa).

Residue Lys-10 to Gly-13 coordinates ATP. Gly-52 is a binding site for UMP. Residues Gly-53 and Arg-57 each coordinate ATP. UMP contacts are provided by residues Asp-72 and Thr-133 to Thr-140. Residues Thr-160, Tyr-166, and Asp-169 each contribute to the ATP site.

Belongs to the UMP kinase family. As to quaternary structure, homohexamer.

It localises to the cytoplasm. It carries out the reaction UMP + ATP = UDP + ADP. It functions in the pathway pyrimidine metabolism; CTP biosynthesis via de novo pathway; UDP from UMP (UMPK route): step 1/1. Inhibited by UTP. Its function is as follows. Catalyzes the reversible phosphorylation of UMP to UDP. The protein is Uridylate kinase of Polaromonas naphthalenivorans (strain CJ2).